The following is a 316-amino-acid chain: tRNA dimethylallyltransferase (316 aa).

ATP is bound at residue 17–24 (GPTASGKT). 19-24 (TASGKT) contacts substrate. Interaction with substrate tRNA regions lie at residues 42–45 (DSAL), 166–170 (QRLSR), and 247–252 (RCVGYR).

Belongs to the IPP transferase family. Monomer. Requires Mg(2+) as cofactor.

It catalyses the reaction adenosine(37) in tRNA + dimethylallyl diphosphate = N(6)-dimethylallyladenosine(37) in tRNA + diphosphate. Its function is as follows. Catalyzes the transfer of a dimethylallyl group onto the adenine at position 37 in tRNAs that read codons beginning with uridine, leading to the formation of N6-(dimethylallyl)adenosine (i(6)A). The chain is tRNA dimethylallyltransferase from Salmonella paratyphi A (strain ATCC 9150 / SARB42).